The primary structure comprises 425 residues: Dual-specificity RNA methyltransferase RlmN (425 aa).

E136 (proton acceptor) is an active-site residue. In terms of domain architecture, Radical SAM core spans 142-389 (GDDRGTLCVS…VRTPRGRDIL (248 aa)). An intrachain disulfide couples C149 to C392. [4Fe-4S] cluster-binding residues include C156, C160, and C163. Residues 218–219 (GE), S250, 272–274 (SLH), and N349 contribute to the S-adenosyl-L-methionine site. C392 acts as the S-methylcysteine intermediate in catalysis.

Belongs to the radical SAM superfamily. RlmN family. The cofactor is [4Fe-4S] cluster.

It localises to the cytoplasm. The enzyme catalyses adenosine(2503) in 23S rRNA + 2 reduced [2Fe-2S]-[ferredoxin] + 2 S-adenosyl-L-methionine = 2-methyladenosine(2503) in 23S rRNA + 5'-deoxyadenosine + L-methionine + 2 oxidized [2Fe-2S]-[ferredoxin] + S-adenosyl-L-homocysteine. It carries out the reaction adenosine(37) in tRNA + 2 reduced [2Fe-2S]-[ferredoxin] + 2 S-adenosyl-L-methionine = 2-methyladenosine(37) in tRNA + 5'-deoxyadenosine + L-methionine + 2 oxidized [2Fe-2S]-[ferredoxin] + S-adenosyl-L-homocysteine. Its function is as follows. Specifically methylates position 2 of adenine 2503 in 23S rRNA and position 2 of adenine 37 in tRNAs. m2A2503 modification seems to play a crucial role in the proofreading step occurring at the peptidyl transferase center and thus would serve to optimize ribosomal fidelity. The protein is Dual-specificity RNA methyltransferase RlmN of Methylorubrum populi (strain ATCC BAA-705 / NCIMB 13946 / BJ001) (Methylobacterium populi).